Consider the following 352-residue polypeptide: MTIAIGRAPAERGWFDILDDWLKRDRFVFVGWSGILLFPCAYLALGGWLTGTTFVTSWYTHGLASSYLEGCNFLTVAVSTPANSMGHSLLLLWGPEAQGDFTRWCQLGGLWTFIALHGAFGLIGFMLRQFEIARLVGVRPYNAIAFSAPIAVFVSVFLIYPLGQSSWFFAPSFGVAAIFRFLLFFQGFHNWTLNPFHMMGVAGVLGGALLCAIHGATVENTLFQDGEGASTFRAFNPTQAEETYSMVTANRFWSQIFGIAFSNKRWLHFFMLFVPVTGLWMSAIGVVGLALNLRSYDFISQEIRAAEDPEFETFYTKNLLLNEGIRAWMAPQDQPHENFVFPEEVLPRGNAL.

At 1–31 (MTIAIGRAPAERGWFDILDDWLKRDRFVFVG) the chain is on the cytoplasmic side. A helical membrane pass occupies residues 32–53 (WSGILLFPCAYLALGGWLTGTT). The Lumenal portion of the chain corresponds to 54-108 (FVTSWYTHGLASSYLEGCNFLTVAVSTPANSMGHSLLLLWGPEAQGDFTRWCQLG). Residues 109-131 (GLWTFIALHGAFGLIGFMLRQFE) traverse the membrane as a helical segment. Residue His-117 participates in chlorophyll a binding. Position 129 (Gln-129) interacts with pheophytin a. Residues 132 to 140 (IARLVGVRP) lie on the Cytoplasmic side of the membrane. A helical membrane pass occupies residues 141-160 (YNAIAFSAPIAVFVSVFLIY). Asn-142 serves as a coordination point for pheophytin a. At 161 to 193 (PLGQSSWFFAPSFGVAAIFRFLLFFQGFHNWTL) the chain is on the lumenal side. Residues 194-217 (NPFHMMGVAGVLGGALLCAIHGAT) traverse the membrane as a helical segment. Chlorophyll a is bound at residue His-197. 2 residues coordinate a plastoquinone: His-214 and Phe-261. His-214 contacts Fe cation. Residues 218 to 265 (VENTLFQDGEGASTFRAFNPTQAEETYSMVTANRFWSQIFGIAFSNKR) lie on the Cytoplasmic side of the membrane. Residues 266 to 288 (WLHFFMLFVPVTGLWMSAIGVVG) traverse the membrane as a helical segment. His-268 contributes to the Fe cation binding site. Residues 289-352 (LALNLRSYDF…EEVLPRGNAL (64 aa)) lie on the Lumenal side of the membrane.

It belongs to the reaction center PufL/M/PsbA/D family. In terms of assembly, PSII is composed of 1 copy each of membrane proteins PsbA, PsbB, PsbC, PsbD, PsbE, PsbF, PsbH, PsbI, PsbJ, PsbK, PsbL, PsbM, PsbT, PsbX, PsbY, PsbZ, Psb30/Ycf12, peripheral proteins PsbO, CyanoQ (PsbQ), PsbU, PsbV and a large number of cofactors. It forms dimeric complexes. Part of a photosystem II (PSII) assembly intermediate complex PSII-I; crystallized from a strain deleted of psbJ, it forms monomeric PSII before addition of the oxygen evolving complex. PSII-I includes 3 assembly factors not found in mature PSII (Psb27, Psb28 and Psb34). The cofactor is The D1/D2 heterodimer binds P680, chlorophylls that are the primary electron donor of PSII, and subsequent electron acceptors. It shares a non-heme iron and each subunit binds pheophytin, quinone, additional chlorophylls, carotenoids and lipids. There is also a Cl(-1) ion associated with D1 and D2, which is required for oxygen evolution. PSII binds additional chlorophylls, carotenoids and specific lipids..

It localises to the cellular thylakoid membrane. The enzyme catalyses 2 a plastoquinone + 4 hnu + 2 H2O = 2 a plastoquinol + O2. In terms of biological role, photosystem II (PSII) is a light-driven water:plastoquinone oxidoreductase that uses light energy to abstract electrons from H(2)O, generating O(2) and a proton gradient subsequently used for ATP formation. It consists of a core antenna complex that captures photons, and an electron transfer chain that converts photonic excitation into a charge separation. The D1/D2 (PsbA/PsbD) reaction center heterodimer binds P680, the primary electron donor of PSII as well as several subsequent electron acceptors. D2 is needed for assembly of a stable PSII complex. This Thermosynechococcus vestitus (strain NIES-2133 / IAM M-273 / BP-1) protein is Photosystem II D2 protein.